We begin with the raw amino-acid sequence, 101 residues long: NADH-quinone oxidoreductase subunit K (101 aa).

3 helical membrane passes run 5 to 25 (LTHYVVASGILFAIGLAGIIL), 30 to 50 (IVILMCLEIMLNAANLALVAF), and 61 to 81 (VLVFFVITVAAAEVAVGLALI).

It belongs to the complex I subunit 4L family. In terms of assembly, NDH-1 is composed of 14 different subunits. Subunits NuoA, H, J, K, L, M, N constitute the membrane sector of the complex.

It localises to the cell inner membrane. It catalyses the reaction a quinone + NADH + 5 H(+)(in) = a quinol + NAD(+) + 4 H(+)(out). Its function is as follows. NDH-1 shuttles electrons from NADH, via FMN and iron-sulfur (Fe-S) centers, to quinones in the respiratory chain. The immediate electron acceptor for the enzyme in this species is believed to be ubiquinone. Couples the redox reaction to proton translocation (for every two electrons transferred, four hydrogen ions are translocated across the cytoplasmic membrane), and thus conserves the redox energy in a proton gradient. In Methylacidiphilum infernorum (isolate V4) (Methylokorus infernorum (strain V4)), this protein is NADH-quinone oxidoreductase subunit K.